A 103-amino-acid chain; its full sequence is 6-pyruvoyl tetrahydrobiopterin synthase (103 aa).

Residue Ala1 is modified to N-acetylalanine. His27 provides a ligand contact to Zn(2+). Residues His53 and Glu92 each act as charge relay system in the active site.

The protein belongs to the PTPS family. As to quaternary structure, homohexamer formed of two homotrimers in a head to head fashion. The cofactor is Zn(2+).

It carries out the reaction 7,8-dihydroneopterin 3'-triphosphate = 6-pyruvoyl-5,6,7,8-tetrahydropterin + triphosphate + H(+). It participates in cofactor biosynthesis; tetrahydrobiopterin biosynthesis; tetrahydrobiopterin from 7,8-dihydroneopterin triphosphate: step 1/3. In terms of biological role, involved in the biosynthesis of tetrahydrobiopterin, an essential cofactor of aromatic amino acid hydroxylases. Catalyzes the transformation of 7,8-dihydroneopterin triphosphate into 6-pyruvoyl tetrahydropterin. The polypeptide is 6-pyruvoyl tetrahydrobiopterin synthase (pts) (Salmo salar (Atlantic salmon)).